The following is a 719-amino-acid chain: La-related protein 4 (719 aa).

Met1 is modified (N-acetylmethionine). An interaction with PABPC1 region spans residues 12–21 (TGLNPNAKVW). The segment at 21–55 (WQEIPSGNPDGTPVTEPSWHETAATSGSHPEGHTE) is disordered. An interaction with the poly-A tract of mRNA region spans residues 107–299 (SSAISTEDLK…PIQTPTQYPS (193 aa)). The HTH La-type RNA-binding domain maps to 109–198 (AISTEDLKEC…RPSHKRCIVI (90 aa)). The 79-residue stretch at 199–277 (LREIPETTPV…KAINTFFAKN (79 aa)) folds into the RRM domain. Position 363 is an omega-N-methylarginine (Arg363). 2 disordered regions span residues 363–398 (RPFP…LSRS) and 437–470 (GRGR…APTP). Low complexity predominate over residues 376 to 389 (SSSGSEHSTEGSVS). 2 positions are modified to phosphoserine: Ser387 and Ser396. Positions 439–448 (GRRTLFRGRR) are enriched in basic residues. Residues 460–470 (PAATEAKAPTP) show a composition bias toward low complexity. Position 500 is a phosphoserine (Ser500). Composition is skewed to polar residues over residues 529-538 (DCTSAPLSIS) and 578-599 (SSPT…SNIN). 3 disordered regions span residues 529–562 (DCTS…QMED), 576–601 (PVSS…INPP), and 615–719 (AEVC…RSPK). Phosphoserine occurs at positions 578, 592, and 642. Thr644 carries the phosphothreonine modification. The segment covering 654 to 673 (KPVEKPHEKPETRASKDHSG) has biased composition (basic and acidic residues). Arg681 carries the omega-N-methylarginine modification. Ser717 is subject to Phosphoserine.

Interacts (via N-terminal region) with PABPC1. Interacts with RACK1.

It is found in the cytoplasm. The protein resides in the stress granule. The protein localises to the cytosol. Its function is as follows. RNA binding protein that binds to the poly-A tract of mRNA molecules. Associates with the 40S ribosomal subunit and with polysomes. Plays a role in the regulation of mRNA translation. Plays a role in the regulation of cell morphology and cytoskeletal organization. In Mus musculus (Mouse), this protein is La-related protein 4 (Larp4).